We begin with the raw amino-acid sequence, 258 residues long: Aspartate/glutamate leucyltransferase (258 aa).

It belongs to the R-transferase family. Bpt subfamily.

The protein localises to the cytoplasm. The catalysed reaction is N-terminal L-glutamyl-[protein] + L-leucyl-tRNA(Leu) = N-terminal L-leucyl-L-glutamyl-[protein] + tRNA(Leu) + H(+). It catalyses the reaction N-terminal L-aspartyl-[protein] + L-leucyl-tRNA(Leu) = N-terminal L-leucyl-L-aspartyl-[protein] + tRNA(Leu) + H(+). Functionally, functions in the N-end rule pathway of protein degradation where it conjugates Leu from its aminoacyl-tRNA to the N-termini of proteins containing an N-terminal aspartate or glutamate. The polypeptide is Aspartate/glutamate leucyltransferase (Rhodopseudomonas palustris (strain BisB18)).